The following is a 786-amino-acid chain: Ciliated left-right organizer ZP-N domains-containing protein (786 aa).

Positions 1–18 (MWGSVAVVWAICLACIQP) are cleaved as a signal peptide.

As to expression, expressed specifically by cells of the ciliated left-right organizer.

In terms of biological role, plays a role in left-right patterning process. The chain is Ciliated left-right organizer ZP-N domains-containing protein (Ciroz) from Mus musculus (Mouse).